The following is a 140-amino-acid chain: Anti-sigma F factor (140 aa).

This sequence belongs to the anti-sigma-factor family.

It carries out the reaction L-seryl-[protein] + ATP = O-phospho-L-seryl-[protein] + ADP + H(+). It catalyses the reaction L-threonyl-[protein] + ATP = O-phospho-L-threonyl-[protein] + ADP + H(+). Binds to sigma F and blocks its ability to form an RNA polymerase holoenzyme (E-sigma F). Phosphorylates SpoIIAA on a serine residue. This phosphorylation may enable SpoIIAA to act as an anti-anti-sigma factor that counteracts SpoIIAB and thus releases sigma F from inhibition. This is Anti-sigma F factor from Clostridium perfringens (strain ATCC 13124 / DSM 756 / JCM 1290 / NCIMB 6125 / NCTC 8237 / Type A).